A 138-amino-acid chain; its full sequence is MNSLTIIFLLSGLTAYHAVLADGTGSSESVTAGDSGVVVLVMIGALLTLLMTIPIIGLFGIYVRTRASIEEMRGILMQIHLRLITGDQRSNRGDVELGAGASLLTISSQPPSYAEALLMEPVEPQQQEGVPLEAEIRV.

Helical transmembrane passes span 4–20 (LTII…HAVL) and 37–53 (VVVL…LMTI).

It is found in the membrane. The chain is Putative membrane protein ORF6 (ORF6) from Ictalurid herpesvirus 1 (strain Auburn) (IcHV-1).